A 386-amino-acid polypeptide reads, in one-letter code: Succinate--CoA ligase [ADP-forming] subunit beta (386 aa).

One can recognise an ATP-grasp domain in the interval 9–244 (KAVLRSYGVS…LDEEDAKEIE (236 aa)). ATP is bound by residues Lys-46, 53–55 (GRG), Glu-99, Cys-102, and Glu-107. Positions 199 and 213 each coordinate Mg(2+). Residues Asn-264 and 321–323 (GIM) each bind substrate.

It belongs to the succinate/malate CoA ligase beta subunit family. As to quaternary structure, heterotetramer of two alpha and two beta subunits. It depends on Mg(2+) as a cofactor.

The enzyme catalyses succinate + ATP + CoA = succinyl-CoA + ADP + phosphate. It carries out the reaction GTP + succinate + CoA = succinyl-CoA + GDP + phosphate. Its pathway is carbohydrate metabolism; tricarboxylic acid cycle; succinate from succinyl-CoA (ligase route): step 1/1. Its function is as follows. Succinyl-CoA synthetase functions in the citric acid cycle (TCA), coupling the hydrolysis of succinyl-CoA to the synthesis of either ATP or GTP and thus represents the only step of substrate-level phosphorylation in the TCA. The beta subunit provides nucleotide specificity of the enzyme and binds the substrate succinate, while the binding sites for coenzyme A and phosphate are found in the alpha subunit. The protein is Succinate--CoA ligase [ADP-forming] subunit beta of Bacillus thuringiensis (strain Al Hakam).